Here is an 876-residue protein sequence, read N- to C-terminus: Valine--tRNA ligase (876 aa).

The 'HIGH' region motif lies at 43–53 (PNVTGVLHMGH). Residues 533–537 (KMSKS) carry the 'KMSKS' region motif. Lysine 536 contacts ATP. A coiled-coil region spans residues 804–876 (GALIDVEEEI…DSLNQLQSTK (73 aa)).

It belongs to the class-I aminoacyl-tRNA synthetase family. ValS type 1 subfamily. In terms of assembly, monomer.

The protein localises to the cytoplasm. The catalysed reaction is tRNA(Val) + L-valine + ATP = L-valyl-tRNA(Val) + AMP + diphosphate. Its function is as follows. Catalyzes the attachment of valine to tRNA(Val). As ValRS can inadvertently accommodate and process structurally similar amino acids such as threonine, to avoid such errors, it has a 'posttransfer' editing activity that hydrolyzes mischarged Thr-tRNA(Val) in a tRNA-dependent manner. This Porphyromonas gingivalis (strain ATCC 33277 / DSM 20709 / CIP 103683 / JCM 12257 / NCTC 11834 / 2561) protein is Valine--tRNA ligase.